A 98-amino-acid chain; its full sequence is DNA-binding protein Fis (98 aa).

The segment at residues Gln-74–Lys-93 is a DNA-binding region (H-T-H motif).

This sequence belongs to the transcriptional regulatory Fis family. As to quaternary structure, homodimer.

Activates ribosomal RNA transcription. Plays a direct role in upstream activation of rRNA promoters. This is DNA-binding protein Fis from Buchnera aphidicola subsp. Acyrthosiphon pisum (strain 5A).